The primary structure comprises 233 residues: Homeobox protein not2 (233 aa).

A DNA-binding region (homeobox) is located at residues 135–194 (LKRIRTVFTPEQLERLEKEFLKQQYMVGTERVDLASTLNLTETQVKVWFQNRRIKWRKQS). Residues 212–233 (SSDHTDDSRETEEEEDDVDVEL) are disordered. Over residues 220 to 233 (RETEEEEDDVDVEL) the composition is skewed to acidic residues.

In terms of tissue distribution, localized to the dorsal lip of the blastopore (Spemann organizer) during early gastrulation, after which expression continues in tissues derived from the organizer. Expressed in the notochord during mid-gastrulation, the chordoneural hinge, notochord and ventral spinal cord of the tailbud at stage 22, and finally the tip of the tail in the tadpole (stage 35).

The protein resides in the nucleus. In terms of biological role, transcriptional repressor. Plays a fundamental role in notochord formation, acting within the mesodermal region. Acts downstream of gsc and upstream of chrd and foxa4-A/pintallavis. This chain is Homeobox protein not2, found in Xenopus laevis (African clawed frog).